The primary structure comprises 365 residues: DNA replication and repair protein RecF (365 aa).

ATP is bound at residue 30–37; sequence GANGQGKT.

This sequence belongs to the RecF family.

Its subcellular location is the cytoplasm. The RecF protein is involved in DNA metabolism; it is required for DNA replication and normal SOS inducibility. RecF binds preferentially to single-stranded, linear DNA. It also seems to bind ATP. In Geobacter sulfurreducens (strain ATCC 51573 / DSM 12127 / PCA), this protein is DNA replication and repair protein RecF.